The following is a 534-amino-acid chain: UDP-glucuronosyltransferase 1A5 (534 aa).

An N-terminal signal peptide occupies residues 1–28 (MATGLQVPLPQLATGLLLLLSVQPWAES). Residues Asn-119, Asn-296, and Asn-348 are each glycosylated (N-linked (GlcNAc...) asparagine). The helical transmembrane segment at 492 to 508 (VIGFLLAVVLTVAFITF) threads the bilayer.

It belongs to the UDP-glycosyltransferase family. In terms of assembly, homodimer. Homooligomer. Interacts with UGT1A1, UGT1A3, UGT1A4, UGT1A6, UGT1A7, UGT1A8, UGT1A9 and UGT1A10 to form heterodimers. Isoform 1 interacts with isoform 2/i2 suggesting that oligomerization is involved in negative regulation of transferase activity by isoform 2. Isoform 1 also interacts with respective i2 isoforms of UGT1A1, UGT1A3, UGT1A4, UGT1A6, UGT1A7, UGT1A8, UGT1A9 and UGT1A10. In terms of tissue distribution, isoform 1 and isoform 2 are expressed in colon and small intestine. Neither isoform is expressed in liver, kidney or esophagus.

The protein localises to the endoplasmic reticulum membrane. The enzyme catalyses glucuronate acceptor + UDP-alpha-D-glucuronate = acceptor beta-D-glucuronoside + UDP + H(+). It carries out the reaction zolasartan + UDP-alpha-D-glucuronate = zolarsartan-1-N-beta-D-glucuronide + UDP. Functionally, UDP-glucuronosyltransferase (UGT) that catalyzes phase II biotransformation reactions in which lipophilic substrates are conjugated with glucuronic acid to increase the metabolite's water solubility, thereby facilitating excretion into either the urine or bile. Essential for the elimination and detoxification of drugs, xenobiotics and endogenous compounds. Involved in the glucuronidation of the AGTR1 angiotensin receptor antagonist zolarsatan, a drug which can inhibit the effect of angiotensin II. Lacks UGT glucuronidation activity but acts as a negative regulator of isoform 1. This chain is UDP-glucuronosyltransferase 1A5, found in Homo sapiens (Human).